The primary structure comprises 253 residues: CTP:phosphoglutamine cytidylyltransferase (253 aa).

The enzyme catalyses N(5)-phospho-L-glutamine + CTP + H(+) = N(5)-(cytidine 5'-diphosphoramidyl)-L-glutamine + diphosphate. It participates in capsule biogenesis; capsule polysaccharide biosynthesis. Its function is as follows. Involved in the biosynthesis of the O-methyl phosphoramidate (MeOPN) group found on the capsular polysaccharide (CPS) of C.jejuni. Catalyzes the formation of CDP-L-glutamine from CTP and L-glutamine phosphate. In the presence of MnCTP, catalyzes the displacement of pyrophosphate from CTP using phosphoramidate, methyl phosphate, methyl phosphonate, phosphate, arsenate, ethanolamine phosphate, (R/S)-glycerol-1-phosphate, glycerol-2-phosphate, serinol phosphate, L-serine phosphate and 3-phospho-D-glycerate as substrate in addition to L-glutamine phosphate. This is CTP:phosphoglutamine cytidylyltransferase from Campylobacter jejuni subsp. jejuni serotype O:2 (strain ATCC 700819 / NCTC 11168).